We begin with the raw amino-acid sequence, 197 residues long: Large ribosomal subunit protein bL25 (197 aa).

Belongs to the bacterial ribosomal protein bL25 family. CTC subfamily. As to quaternary structure, part of the 50S ribosomal subunit; part of the 5S rRNA/L5/L18/L25 subcomplex. Contacts the 5S rRNA. Binds to the 5S rRNA independently of L5 and L18.

This is one of the proteins that binds to the 5S RNA in the ribosome where it forms part of the central protuberance. The protein is Large ribosomal subunit protein bL25 of Carboxydothermus hydrogenoformans (strain ATCC BAA-161 / DSM 6008 / Z-2901).